An 867-amino-acid polypeptide reads, in one-letter code: Putative ubiquitin thioesterase L96 (867 aa).

Disordered regions lie at residues 49–73 (VNQY…GKQD), 177–204 (IKSV…MKKK), 231–271 (YILS…PKYR), and 379–591 (LSTQ…YKGG). 2 stretches are compositionally biased toward basic residues: residues 234-258 (SRKK…RSPG) and 421-430 (KITRKPKSPR). Composition is skewed to low complexity over residues 433–462 (PPAS…SVRA) and 472–551 (PPSS…KSPS). The span at 565–575 (ITVDPSVTPPS) shows a compositional bias: polar residues. A compositionally biased stretch (basic and acidic residues) spans 582-591 (RPELPEYKGG). The OTU domain occupies 606–745 (YKVIPVKGDG…DYHYTALTPL (140 aa)). The active site involves Asp-614. The active-site Nucleophile is Cys-617. His-738 is a catalytic residue.

The enzyme catalyses Thiol-dependent hydrolysis of ester, thioester, amide, peptide and isopeptide bonds formed by the C-terminal Gly of ubiquitin (a 76-residue protein attached to proteins as an intracellular targeting signal).. Hydrolase that can remove conjugated ubiquitin from proteins and may therefore play an important regulatory role at the level of protein turnover by preventing degradation. May be involved in TIV genomic DNA packaging in a manner related to the Gag polyproteins of the mammalian viruses. This is Putative ubiquitin thioesterase L96 from Tipula iridescent virus (TIV).